Here is a 101-residue protein sequence, read N- to C-terminus: NADH-quinone oxidoreductase subunit K (101 aa).

The next 3 membrane-spanning stretches (helical) occupy residues 4 to 24, 30 to 50, and 62 to 82; these read LGHM…GIFL, IVLL…FVGF, and FVFF…AILV.

The protein belongs to the complex I subunit 4L family. As to quaternary structure, NDH-1 is composed of 14 different subunits. Subunits NuoA, H, J, K, L, M, N constitute the membrane sector of the complex.

The protein localises to the cell inner membrane. The enzyme catalyses a quinone + NADH + 5 H(+)(in) = a quinol + NAD(+) + 4 H(+)(out). In terms of biological role, NDH-1 shuttles electrons from NADH, via FMN and iron-sulfur (Fe-S) centers, to quinones in the respiratory chain. The immediate electron acceptor for the enzyme in this species is believed to be ubiquinone. Couples the redox reaction to proton translocation (for every two electrons transferred, four hydrogen ions are translocated across the cytoplasmic membrane), and thus conserves the redox energy in a proton gradient. The chain is NADH-quinone oxidoreductase subunit K from Stenotrophomonas maltophilia (strain K279a).